Reading from the N-terminus, the 109-residue chain is Large ribosomal subunit protein uL18c (109 aa).

The protein belongs to the universal ribosomal protein uL18 family. As to quaternary structure, part of the 50S ribosomal subunit; contacts the 5S rRNA.

It is found in the plastid. The protein resides in the chloroplast. Functionally, binds 5S rRNA, forms part of the central protuberance of the 50S subunit. This is Large ribosomal subunit protein uL18c (rpl18) from Cyanidioschyzon merolae (strain NIES-3377 / 10D) (Unicellular red alga).